The primary structure comprises 149 residues: D-aminoacyl-tRNA deacylase (149 aa).

The Gly-cisPro motif, important for rejection of L-amino acids signature appears at 137 to 138; that stretch reads GP.

The protein belongs to the DTD family. In terms of assembly, homodimer.

The protein resides in the cytoplasm. The enzyme catalyses glycyl-tRNA(Ala) + H2O = tRNA(Ala) + glycine + H(+). The catalysed reaction is a D-aminoacyl-tRNA + H2O = a tRNA + a D-alpha-amino acid + H(+). Its function is as follows. An aminoacyl-tRNA editing enzyme that deacylates mischarged D-aminoacyl-tRNAs. Also deacylates mischarged glycyl-tRNA(Ala), protecting cells against glycine mischarging by AlaRS. Acts via tRNA-based rather than protein-based catalysis; rejects L-amino acids rather than detecting D-amino acids in the active site. By recycling D-aminoacyl-tRNA to D-amino acids and free tRNA molecules, this enzyme counteracts the toxicity associated with the formation of D-aminoacyl-tRNA entities in vivo and helps enforce protein L-homochirality. The protein is D-aminoacyl-tRNA deacylase of Alkaliphilus metalliredigens (strain QYMF).